A 194-amino-acid chain; its full sequence is Putative manganese efflux pump MntP (194 aa).

6 helical membrane passes run 3-23 (FYAT…VAVC), 40-60 (GFIF…LGLY), 65-85 (IIQW…GRMI), 109-129 (LIAT…GLAF), 134-154 (IVHT…LGML), and 169-189 (IIGG…HLDL).

The protein belongs to the MntP (TC 9.B.29) family.

The protein resides in the cell inner membrane. Functionally, probably functions as a manganese efflux pump. The polypeptide is Putative manganese efflux pump MntP (Proteus mirabilis (strain HI4320)).